Here is a 314-residue protein sequence, read N- to C-terminus: Probable 5-dehydro-4-deoxyglucarate dehydratase (314 aa).

It belongs to the DapA family.

The catalysed reaction is 5-dehydro-4-deoxy-D-glucarate + H(+) = 2,5-dioxopentanoate + CO2 + H2O. The protein operates within carbohydrate acid metabolism; D-glucarate degradation; 2,5-dioxopentanoate from D-glucarate: step 2/2. This is Probable 5-dehydro-4-deoxyglucarate dehydratase from Bradyrhizobium diazoefficiens (strain JCM 10833 / BCRC 13528 / IAM 13628 / NBRC 14792 / USDA 110).